Consider the following 441-residue polypeptide: Heat shock factor protein 4 (441 aa).

A DNA-binding region spans residues 17–121; sequence NVPAFLTKLW…EHLLEHIKRK (105 aa). Residues 130-205 form a hydrophobic repeat HR-A/B region; it reads TKVRQEDLSK…QMQSNSPSTV (76 aa).

It belongs to the HSF family. As to expression, predominantly expressed in the eye.

The protein localises to the nucleus. Its function is as follows. Heat-shock transcription factor that specifically binds heat shock promoter elements (HSE). Required for denucleation and organelle rupture and degradation that occur during eye lens terminal differentiation, when fiber cells that compose the lens degrade all membrane-bound organelles in order to provide lens with transparency to allow the passage of light. In this process, may regulate denucleation of lens fiber cells in part by activating dnase1l1l and dnase2b transcription. May be involved in DNA repair through the transcriptional regulation of rad51. May up-regulate TP53 protein in lens fiber cells, possibly through protein stabilization. In the eye lens, controls the expression of alpha-crystallin B chain/CRYAB and consequently may be involved in the regulation of lysosomal acidification. This is Heat shock factor protein 4 from Danio rerio (Zebrafish).